Reading from the N-terminus, the 311-residue chain is Olfactory receptor 8H1 (311 aa).

Topologically, residues Met-1 to Met-25 are extracellular. Asn-5 carries N-linked (GlcNAc...) asparagine glycosylation. Residues Ala-26–Ile-46 form a helical membrane-spanning segment. Topologically, residues Leu-47–Gln-54 are cytoplasmic. The chain crosses the membrane as a helical span at residues Leu-55–Thr-75. Topologically, residues Val-76 to Ala-98 are extracellular. The cysteines at positions 96 and 188 are disulfide-linked. A helical membrane pass occupies residues Gln-99 to Tyr-119. Topologically, residues Asp-120–Arg-138 are cytoplasmic. The chain crosses the membrane as a helical span at residues Leu-139–Val-159. The Extracellular segment spans residues Val-160–Ile-196. The helical transmembrane segment at Met-197–Ser-216 threads the bilayer. At Tyr-217 to Ala-236 the chain is on the cytoplasmic side. A helical transmembrane segment spans residues Leu-237–Thr-257. Residues Tyr-258–Asp-270 are Extracellular-facing. A helical membrane pass occupies residues Gln-271–Leu-291. Residues Arg-292 to Arg-311 are Cytoplasmic-facing.

The protein belongs to the G-protein coupled receptor 1 family.

It localises to the cell membrane. Odorant receptor. The chain is Olfactory receptor 8H1 (OR8H1) from Homo sapiens (Human).